Reading from the N-terminus, the 451-residue chain is Trigger factor (451 aa).

The PPIase FKBP-type domain occupies 165 to 250 (DDKLTIDFEG…LHQIQAREML (86 aa)).

It belongs to the FKBP-type PPIase family. Tig subfamily.

The protein resides in the cytoplasm. The catalysed reaction is [protein]-peptidylproline (omega=180) = [protein]-peptidylproline (omega=0). Its function is as follows. Involved in protein export. Acts as a chaperone by maintaining the newly synthesized protein in an open conformation. Functions as a peptidyl-prolyl cis-trans isomerase. This Helicobacter pylori (strain ATCC 700392 / 26695) (Campylobacter pylori) protein is Trigger factor (tig).